Consider the following 34-residue polypeptide: Toxin Ptu1 (34 aa).

Cystine bridges form between Cys5–Cys20, Cys12–Cys26, and Cys19–Cys33.

Its subcellular location is the secreted. Binds reversibly and blocks N-type voltage-gated calcium channels (Cav). The protein is Toxin Ptu1 of Peirates turpis (Assassin bug).